Consider the following 250-residue polypeptide: Ribonuclease 3 (250 aa).

Residues 1-15 are compositionally biased toward basic residues; the sequence is MTKTPAKKKRARSSK. The segment at 1–21 is disordered; that stretch reads MTKTPAKKKRARSSKAKGTDA. The region spanning 22-150 is the RNase III domain; that stretch reads NAALEARIGH…VIGAIFLDGG (129 aa). Residue E63 coordinates Mg(2+). D67 is a catalytic residue. Positions 136 and 139 each coordinate Mg(2+). The active site involves E139. The DRBM domain maps to 175–244; it reads DPKTVLQEWA…ASVMIEREGV (70 aa).

It belongs to the ribonuclease III family. As to quaternary structure, homodimer. It depends on Mg(2+) as a cofactor.

The protein resides in the cytoplasm. It carries out the reaction Endonucleolytic cleavage to 5'-phosphomonoester.. Digests double-stranded RNA. Involved in the processing of primary rRNA transcript to yield the immediate precursors to the large and small rRNAs (23S and 16S). Processes some mRNAs, and tRNAs when they are encoded in the rRNA operon. Processes pre-crRNA and tracrRNA of type II CRISPR loci if present in the organism. The chain is Ribonuclease 3 from Bradyrhizobium diazoefficiens (strain JCM 10833 / BCRC 13528 / IAM 13628 / NBRC 14792 / USDA 110).